Reading from the N-terminus, the 319-residue chain is Acetyl-coenzyme A carboxylase carboxyl transferase subunit alpha (319 aa).

Residues 35 to 296 (DLDKEIEQLE…KATLLRQLED (262 aa)) form the CoA carboxyltransferase C-terminal domain.

It belongs to the AccA family. In terms of assembly, acetyl-CoA carboxylase is a heterohexamer composed of biotin carboxyl carrier protein (AccB), biotin carboxylase (AccC) and two subunits each of ACCase subunit alpha (AccA) and ACCase subunit beta (AccD).

The protein resides in the cytoplasm. It carries out the reaction N(6)-carboxybiotinyl-L-lysyl-[protein] + acetyl-CoA = N(6)-biotinyl-L-lysyl-[protein] + malonyl-CoA. The protein operates within lipid metabolism; malonyl-CoA biosynthesis; malonyl-CoA from acetyl-CoA: step 1/1. In terms of biological role, component of the acetyl coenzyme A carboxylase (ACC) complex. First, biotin carboxylase catalyzes the carboxylation of biotin on its carrier protein (BCCP) and then the CO(2) group is transferred by the carboxyltransferase to acetyl-CoA to form malonyl-CoA. This Vibrio parahaemolyticus serotype O3:K6 (strain RIMD 2210633) protein is Acetyl-coenzyme A carboxylase carboxyl transferase subunit alpha.